The chain runs to 233 residues: 2,3-bisphosphoglycerate-dependent phosphoglycerate mutase (233 aa).

Residues Arg-8–Asn-15, Thr-21–Gly-22, Arg-60, Glu-87–Tyr-90, Lys-98, Arg-114–Arg-115, and Gly-183–Asn-184 each bind substrate. His-9 (tele-phosphohistidine intermediate) is an active-site residue. Catalysis depends on Glu-87, which acts as the Proton donor/acceptor.

Belongs to the phosphoglycerate mutase family. BPG-dependent PGAM subfamily.

It carries out the reaction (2R)-2-phosphoglycerate = (2R)-3-phosphoglycerate. It functions in the pathway carbohydrate degradation; glycolysis; pyruvate from D-glyceraldehyde 3-phosphate: step 3/5. Its function is as follows. Catalyzes the interconversion of 2-phosphoglycerate and 3-phosphoglycerate. The chain is 2,3-bisphosphoglycerate-dependent phosphoglycerate mutase from Lactococcus lactis subsp. cremoris (strain MG1363).